A 309-amino-acid chain; its full sequence is Probable lipid kinase YegS-like (309 aa).

The DAGKc domain maps to 1–134 (MTTPRWRLIL…IDLLRVDADG (134 aa)). ATP is bound by residues Thr-39, 65 to 71 (GDGTLSA), and Thr-96. Leu-219, Asp-222, and Leu-224 together coordinate Mg(2+). The Proton acceptor role is filled by Glu-280.

Belongs to the diacylglycerol/lipid kinase family. YegS lipid kinase subfamily. The cofactor is Mg(2+). It depends on Ca(2+) as a cofactor.

It is found in the cytoplasm. Functionally, probably phosphorylates lipids; the in vivo substrate is unknown. The protein is Probable lipid kinase YegS-like of Stenotrophomonas maltophilia (strain K279a).